A 433-amino-acid polypeptide reads, in one-letter code: Inositol hexakisphosphate kinase 1 (433 aa).

Positions 100-160 (ETVEQDDTPE…SPKVELHSHS (61 aa)) are disordered. Over residues 113–123 (PRRKHSRRSLH) the composition is skewed to basic residues. Positions 139–149 (SFETSESSQET) are enriched in polar residues. Positions 150 to 160 (KSPKVELHSHS) are enriched in basic and acidic residues. Serine 151 carries the post-translational modification Phosphoserine. 220–228 (PCVLDLKMG) contacts substrate. Residues 362-383 (PLCGPSTSPSNTSLEAGPSSPP) are disordered. A compositionally biased stretch (polar residues) spans 366-375 (PSTSPSNTSL).

It belongs to the inositol phosphokinase (IPK) family.

It localises to the cytoplasm. The protein localises to the nucleus. It catalyses the reaction 1D-myo-inositol hexakisphosphate + ATP = 5-diphospho-1D-myo-inositol 1,2,3,4,6-pentakisphosphate + ADP. The catalysed reaction is 1-diphospho-1D-myo-inositol 2,3,4,5,6-pentakisphosphate + ATP + H(+) = 1,5-bis(diphospho)-1D-myo-inositol 2,3,4,6-tetrakisphosphate + ADP. In terms of biological role, converts inositol hexakisphosphate (InsP6) to diphosphoinositol pentakisphosphate (InsP7/PP-InsP5). Converts 1,3,4,5,6-pentakisphosphate (InsP5) to PP-InsP4. In Rattus norvegicus (Rat), this protein is Inositol hexakisphosphate kinase 1 (Ip6k1).